The chain runs to 247 residues: Anamorsin homolog (247 aa).

The N-terminal SAM-like domain stretch occupies residues 4 to 128 (FKGLQKSLYI…ETGSSARLSF (125 aa)). The segment at 129–160 (AKKNASALNVWKISGDDEELIDEEDLLDEEDK) is linker. The [2Fe-2S] cluster site is built by Cys171, Cys180, Cys183, and Cys185. The interval 171-185 (CSTTGKRKACKNCSC) is fe-S binding site A. [4Fe-4S] cluster contacts are provided by Cys208, Cys211, Cys219, and Cys222. Short sequence motifs (cx2C motif) lie at residues 208 to 211 (CGNC) and 219 to 222 (CSTC). The tract at residues 208–222 (CGNCYLGDAFRCSTC) is fe-S binding site B.

It belongs to the anamorsin family. Monomer. [2Fe-2S] cluster serves as cofactor. [4Fe-4S] cluster is required as a cofactor.

It localises to the cytoplasm. It is found in the mitochondrion intermembrane space. In terms of biological role, component of the cytosolic iron-sulfur (Fe-S) protein assembly (CIA) machinery. Required for the maturation of extramitochondrial Fe-S proteins. Part of an electron transfer chain functioning in an early step of cytosolic Fe-S biogenesis, facilitating the de novo assembly of a [4Fe-4S] cluster on the cytosolic Fe-S scaffold complex. Electrons are transferred from NADPH via a FAD- and FMN-containing diflavin oxidoreductase. Together with the diflavin oxidoreductase, also required for the assembly of the diferric tyrosyl radical cofactor of ribonucleotide reductase (RNR), probably by providing electrons for reduction during radical cofactor maturation in the catalytic small subunit. This chain is Anamorsin homolog, found in Drosophila persimilis (Fruit fly).